The chain runs to 67 residues: DNA-directed RNA polymerase subunit omega (67 aa).

Belongs to the RNA polymerase subunit omega family. As to quaternary structure, the RNAP catalytic core consists of 2 alpha, 1 beta, 1 beta' and 1 omega subunit. When a sigma factor is associated with the core the holoenzyme is formed, which can initiate transcription.

It catalyses the reaction RNA(n) + a ribonucleoside 5'-triphosphate = RNA(n+1) + diphosphate. Its function is as follows. Promotes RNA polymerase assembly. Latches the N- and C-terminal regions of the beta' subunit thereby facilitating its interaction with the beta and alpha subunits. The protein is DNA-directed RNA polymerase subunit omega of Moorella thermoacetica (strain ATCC 39073 / JCM 9320).